Reading from the N-terminus, the 251-residue chain is Aliphatic sulfonates import ATP-binding protein SsuB (251 aa).

The ABC transporter domain maps to 3 to 231 (VSIDGVSKYF…PRSKTSESFQ (229 aa)). Residue 39-46 (GPSGCGKS) coordinates ATP.

This sequence belongs to the ABC transporter superfamily. Aliphatic sulfonates importer (TC 3.A.1.17.2) family. The complex is composed of two ATP-binding proteins (SsuB), two transmembrane proteins (SsuC) and a solute-binding protein (SsuA).

It is found in the cell membrane. It carries out the reaction ATP + H2O + aliphatic sulfonate-[sulfonate-binding protein]Side 1 = ADP + phosphate + aliphatic sulfonateSide 2 + [sulfonate-binding protein]Side 1.. Its function is as follows. Part of the ABC transporter complex SsuABC involved in aliphatic sulfonates import. Responsible for energy coupling to the transport system. This Bacillus cereus (strain ATCC 10987 / NRS 248) protein is Aliphatic sulfonates import ATP-binding protein SsuB.